A 464-amino-acid polypeptide reads, in one-letter code: Serine/threonine-protein kinase 38-like (464 aa).

The residue at position 2 (Ala2) is an N-acetylalanine. Residues 63 to 88 (KKLRRSQHARKETEFLRLKRTRLGLD) are S100B binding. Thr75 is modified (phosphothreonine). In terms of domain architecture, Protein kinase spans 90 to 383 (FESLKVIGRG…VEEIKGHPFF (294 aa)). Residues 96–104 (IGRGAFGEV) and Lys119 contribute to the ATP site. Asp213 acts as the Proton acceptor in catalysis. Phosphoserine; by autocatalysis is present on Ser282. Positions 384–453 (EGVDWEHIRE…KRFEGLTQRG (70 aa)) constitute an AGC-kinase C-terminal domain. Thr442 carries the post-translational modification Phosphothreonine; by STK24/MST3.

It belongs to the protein kinase superfamily. AGC Ser/Thr protein kinase family. As to quaternary structure, homodimeric S100B binds two molecules of STK38L. Interacts with MICAL1; leading to inhibit the protein kinase activity by antagonizing activation by MST1/STK4. Interacts with MOB1 and MOB2. It depends on Mg(2+) as a cofactor. In terms of tissue distribution, ubiquitously expressed with highest levels observed in the thymus.

Its subcellular location is the cytoplasm. It is found in the cytoskeleton. The protein resides in the membrane. It catalyses the reaction L-seryl-[protein] + ATP = O-phospho-L-seryl-[protein] + ADP + H(+). The enzyme catalyses L-threonyl-[protein] + ATP = O-phospho-L-threonyl-[protein] + ADP + H(+). Its activity is regulated as follows. Activated by binding of S100B which releases autoinhibitory N-lobe interactions, enabling ATP to bind and the autophosphorylation of Ser-282. Thr-442 then undergoes calcium-dependent phosphorylation by STK24/MST3. Interactions between phosphorylated Thr-442 and the N-lobe promote additional structural changes that complete the activation of the kinase. Autoinhibition is also released by the binding of MOB1/MOBKL1A and MOB2/HCCA2 to the N-terminal of STK38L. Functionally, involved in the regulation of structural processes in differentiating and mature neuronal cells. This Homo sapiens (Human) protein is Serine/threonine-protein kinase 38-like.